A 49-amino-acid chain; its full sequence is Protein YlcJ (49 aa).

A signal peptide spans 1-21 (MSLVLCFLLMSLFFMYSFVLS).

The sequence is that of Protein YlcJ from Escherichia coli (strain K12).